The sequence spans 485 residues: tRNA sulfurtransferase (485 aa).

The region spanning 63–167 is the THUMP domain; sequence DKLVERLSCM…NELLYLVTAI (105 aa). ATP-binding positions include 185–186, Lys-267, Gly-289, and Gln-298; that span reads LI. Residues Cys-346 and Cys-458 are joined by a disulfide bond. Residues 406–485 enclose the Rhodanese domain; the sequence is LAENEVILDI…FNNIKVYRQN (80 aa). The Cysteine persulfide intermediate role is filled by Cys-458.

This sequence belongs to the ThiI family.

The protein resides in the cytoplasm. The enzyme catalyses [ThiI sulfur-carrier protein]-S-sulfanyl-L-cysteine + a uridine in tRNA + 2 reduced [2Fe-2S]-[ferredoxin] + ATP + H(+) = [ThiI sulfur-carrier protein]-L-cysteine + a 4-thiouridine in tRNA + 2 oxidized [2Fe-2S]-[ferredoxin] + AMP + diphosphate. It catalyses the reaction [ThiS sulfur-carrier protein]-C-terminal Gly-Gly-AMP + S-sulfanyl-L-cysteinyl-[cysteine desulfurase] + AH2 = [ThiS sulfur-carrier protein]-C-terminal-Gly-aminoethanethioate + L-cysteinyl-[cysteine desulfurase] + A + AMP + 2 H(+). The protein operates within cofactor biosynthesis; thiamine diphosphate biosynthesis. Functionally, catalyzes the ATP-dependent transfer of a sulfur to tRNA to produce 4-thiouridine in position 8 of tRNAs, which functions as a near-UV photosensor. Also catalyzes the transfer of sulfur to the sulfur carrier protein ThiS, forming ThiS-thiocarboxylate. This is a step in the synthesis of thiazole, in the thiamine biosynthesis pathway. The sulfur is donated as persulfide by IscS. The sequence is that of tRNA sulfurtransferase from Tolumonas auensis (strain DSM 9187 / NBRC 110442 / TA 4).